The primary structure comprises 95 residues: Aspartyl/glutamyl-tRNA(Asn/Gln) amidotransferase subunit C (95 aa).

Belongs to the GatC family. Heterotrimer of A, B and C subunits.

It catalyses the reaction L-glutamyl-tRNA(Gln) + L-glutamine + ATP + H2O = L-glutaminyl-tRNA(Gln) + L-glutamate + ADP + phosphate + H(+). It carries out the reaction L-aspartyl-tRNA(Asn) + L-glutamine + ATP + H2O = L-asparaginyl-tRNA(Asn) + L-glutamate + ADP + phosphate + 2 H(+). Functionally, allows the formation of correctly charged Asn-tRNA(Asn) or Gln-tRNA(Gln) through the transamidation of misacylated Asp-tRNA(Asn) or Glu-tRNA(Gln) in organisms which lack either or both of asparaginyl-tRNA or glutaminyl-tRNA synthetases. The reaction takes place in the presence of glutamine and ATP through an activated phospho-Asp-tRNA(Asn) or phospho-Glu-tRNA(Gln). In Roseobacter denitrificans (strain ATCC 33942 / OCh 114) (Erythrobacter sp. (strain OCh 114)), this protein is Aspartyl/glutamyl-tRNA(Asn/Gln) amidotransferase subunit C.